The primary structure comprises 175 residues: Ribosome maturation factor RimM (175 aa).

Residues 99-172 (EGEFHLLDLV…WLRLTPPPGL (74 aa)) form the PRC barrel domain.

This sequence belongs to the RimM family. Binds ribosomal protein uS19.

It localises to the cytoplasm. Functionally, an accessory protein needed during the final step in the assembly of 30S ribosomal subunit, possibly for assembly of the head region. Essential for efficient processing of 16S rRNA. May be needed both before and after RbfA during the maturation of 16S rRNA. It has affinity for free ribosomal 30S subunits but not for 70S ribosomes. This is Ribosome maturation factor RimM from Synechococcus sp. (strain WH7803).